We begin with the raw amino-acid sequence, 1512 residues long: Lysophospholipase NTE1 (1512 aa).

Residues 1–48 (MAAPDAMTSLVKSSVALLSSAHESLPTSLAAMKTAETAPSSTFGILGR) are Cytoplasmic-facing. Residues 49–69 (VILSILSVLPTLLFWVSYTLP) form a helical membrane-spanning segment. Residues 70–83 (TWLFTLFSMSLTFT) are Lumenal-facing. Residues 84–104 (MNFTTLMLVLVFVVSTISYFV) form a helical membrane-spanning segment. Topologically, residues 105 to 1512 (RYRYLTMYAR…RTMAPRRASI (1408 aa)) are cytoplasmic. Disordered stretches follow at residues 204 to 230 (NREE…QAHR), 262 to 362 (RHDE…AHPD), 534 to 556 (TQMS…QHDV), and 740 to 770 (TEDD…KRSR). A compositionally biased stretch (acidic residues) spans 208–217 (SDSDEDDGEL). Positions 268 to 291 (GPSSSTPMSPQHRPSMTRNSSFNM) are enriched in polar residues. Over residues 343–358 (HSKQRRSPSRSTKPKS) the composition is skewed to basic residues. Residues 537-549 (SRGTGRSGRSSFS) are compositionally biased toward low complexity. A nucleoside 3',5'-cyclic phosphate is bound by residues 669–793 (LSAS…SNRS) and 830–950 (RLTT…IASR). Residues 751-761 (PTATNTSLRNG) show a composition bias toward polar residues. Residues 1209–1373 (LVLGGGGARG…IDNLTVAHMK (165 aa)) form the PNPLA domain. Residues 1213 to 1218 (GGGARG) carry the GXGXXG motif. The GXSXG motif lies at 1240–1244 (GTSIG). Ser-1242 (nucleophile) is an active-site residue. Catalysis depends on Asp-1360, which acts as the Proton acceptor. Residues 1360–1362 (DGG) carry the DGA/G motif.

This sequence belongs to the NTE family.

The protein resides in the endoplasmic reticulum membrane. The catalysed reaction is a 1-acyl-sn-glycero-3-phosphocholine + H2O = sn-glycerol 3-phosphocholine + a fatty acid + H(+). Inhibited by organophosphorus esters. Its function is as follows. Intracellular phospholipase B that catalyzes the double deacylation of phosphatidylcholine (PC) to glycerophosphocholine (GroPCho). Plays an important role in membrane lipid homeostasis. Responsible for the rapid PC turnover in response to inositol, elevated temperatures, or when choline is present in the growth medium. The sequence is that of Lysophospholipase NTE1 (NTE1) from Phaeosphaeria nodorum (strain SN15 / ATCC MYA-4574 / FGSC 10173) (Glume blotch fungus).